Reading from the N-terminus, the 728-residue chain is Beta-porphyranase A (728 aa).

The signal sequence occupies residues 1–22 (MSYKYIFLLSAFTLGVPPGIYC). Positions 53, 76, 78, 87, 114, and 151 each coordinate substrate. E152 functions as the Proton donor in the catalytic mechanism. The substrate site is built by H235, E279, S326, and W331. E279 (nucleophile) is an active-site residue. Residues 599–701 (TLQNGTFSEG…AVSFDFNSTV (103 aa)) form the CBM-cenC domain.

The protein belongs to the glycosyl hydrolase 86 family.

It carries out the reaction Hydrolysis of beta-D-galactopyranose-(1-&gt;4)-alpha-L-galactopyranose-6-sulfate linkages in porphyran.. Cleaves the sulfated polysaccharide porphyran at the (1-&gt;4) linkages between beta-D-galactopyranose and alpha-L-galactopyranose-6-sulfate, forming mostly the disaccharide alpha-L-galactopyranose-6-sulfate-(1-&gt;3)-beta-D-galactose. Some longer oligosaccharides of even number of residues are also observed. Inactive on the non-sulfated agarose portion of the porphyran backbone. Can also use methylated galactoses. In Phocaeicola plebeius (strain DSM 17135 / JCM 12973 / CCUG 54634 / M2) (Bacteroides plebeius), this protein is Beta-porphyranase A.